Reading from the N-terminus, the 172-residue chain is AIG2-like protein C (172 aa).

13–18 (YGSLQE) contacts substrate. Glutamate 81 acts as the Proton acceptor in catalysis.

It belongs to the gamma-glutamylcyclotransferase family. As to expression, expressed in flowers, leaves, stems and roots.

In terms of biological role, putative gamma-glutamylcyclotransferase. The sequence is that of AIG2-like protein C from Arabidopsis thaliana (Mouse-ear cress).